A 329-amino-acid chain; its full sequence is 7,8-didemethyl-8-hydroxy-5-deazariboflavin synthase (329 aa).

Positions 6–244 constitute a Radical SAM core domain; the sequence is ITYTKNVFLP…EEISIQVAPN (239 aa). Positions 20, 24, and 27 each coordinate [4Fe-4S] cluster.

The protein belongs to the radical SAM superfamily. CofG family. As to quaternary structure, consists of two subunits, CofG and CofH. The cofactor is [4Fe-4S] cluster.

It carries out the reaction 5-amino-5-(4-hydroxybenzyl)-6-(D-ribitylimino)-5,6-dihydrouracil + S-adenosyl-L-methionine = 7,8-didemethyl-8-hydroxy-5-deazariboflavin + 5'-deoxyadenosine + L-methionine + NH4(+) + H(+). Its pathway is cofactor biosynthesis; coenzyme F0 biosynthesis. Catalyzes the radical-mediated synthesis of 7,8-didemethyl-8-hydroxy-5-deazariboflavin from 5-amino-5-(4-hydroxybenzyl)-6-(D-ribitylimino)-5,6-dihydrouracil. The sequence is that of 7,8-didemethyl-8-hydroxy-5-deazariboflavin synthase from Methanoregula boonei (strain DSM 21154 / JCM 14090 / 6A8).